The following is a 256-amino-acid chain: Small ribosomal subunit protein eS1 (256 aa).

Ala2 carries the N-acetylalanine; partial modification.

It belongs to the eukaryotic ribosomal protein eS1 family. In terms of assembly, component of the small ribosomal subunit. Mature ribosomes consist of a small (40S) and a large (60S) subunit. The 40S subunit contains about 33 different proteins and 1 molecule of RNA (18S). The 60S subunit contains about 49 different proteins and 3 molecules of RNA (25S, 5.8S and 5S).

The protein localises to the cytoplasm. This Laccaria bicolor (strain S238N-H82 / ATCC MYA-4686) (Bicoloured deceiver) protein is Small ribosomal subunit protein eS1.